Reading from the N-terminus, the 222-residue chain is Probable pyridoxal 5'-phosphate synthase subunit SNO3 (222 aa).

58–60 is a binding site for L-glutamine; it reads GES. The active-site Nucleophile is Cys91. L-glutamine contacts are provided by residues Arg120 and 151-152; that span reads IR. Residues His197 and Glu199 each act as charge relay system in the active site.

Belongs to the glutaminase PdxT/SNO family.

It catalyses the reaction aldehydo-D-ribose 5-phosphate + D-glyceraldehyde 3-phosphate + L-glutamine = pyridoxal 5'-phosphate + L-glutamate + phosphate + 3 H2O + H(+). The enzyme catalyses L-glutamine + H2O = L-glutamate + NH4(+). Its pathway is cofactor biosynthesis; pyridoxal 5'-phosphate biosynthesis. Its function is as follows. Catalyzes the hydrolysis of glutamine to glutamate and ammonia as part of the biosynthesis of pyridoxal 5'-phosphate. The resulting ammonia molecule is channeled to the active site of a SNZ isoform. This Saccharomyces cerevisiae (strain ATCC 204508 / S288c) (Baker's yeast) protein is Probable pyridoxal 5'-phosphate synthase subunit SNO3 (SNO3).